The chain runs to 69 residues: Toxin Lc a (69 aa).

Disulfide bonds link Cys3–Cys20, Cys13–Cys41, Cys45–Cys56, and Cys57–Cys62.

The protein belongs to the three-finger toxin family. Long-chain subfamily. Type II alpha-neurotoxin sub-subfamily. As to expression, expressed by the venom gland.

Its subcellular location is the secreted. Functionally, binds with high affinity to muscular nicotinic acetylcholine receptors (nAChRs), whereas it binds with a low affinity to neuronal alpha-7/CHRNA7 nAChRs. The polypeptide is Toxin Lc a (Laticauda colubrina (Yellow-lipped sea krait)).